A 53-amino-acid chain; its full sequence is MFYTNVETLLNTNCFALLPEAYAPFDPLVDVLPIIPLLFLLLAFVWQAAVKFR.

The propeptide occupies 1-16 (MFYTNVETLLNTNCFA). Residues 28 to 48 (LVDVLPIIPLLFLLLAFVWQA) form a helical membrane-spanning segment.

This sequence belongs to the PsbK family. PSII is composed of 1 copy each of membrane proteins PsbA, PsbB, PsbC, PsbD, PsbE, PsbF, PsbH, PsbI, PsbJ, PsbK, PsbL, PsbM, PsbT, PsbY, PsbZ, Psb30/Ycf12, at least 3 peripheral proteins of the oxygen-evolving complex and a large number of cofactors. It forms dimeric complexes.

It is found in the plastid. The protein resides in the chloroplast thylakoid membrane. In terms of biological role, one of the components of the core complex of photosystem II (PSII). PSII is a light-driven water:plastoquinone oxidoreductase that uses light energy to abstract electrons from H(2)O, generating O(2) and a proton gradient subsequently used for ATP formation. It consists of a core antenna complex that captures photons, and an electron transfer chain that converts photonic excitation into a charge separation. The sequence is that of Photosystem II reaction center protein K from Euglena anabaena (Euglenaria anabaena).